The following is a 194-amino-acid chain: High mobility group protein B4 (194 aa).

DNA-binding regions (HMG box) lie at residues 9–79 (PKAN…MNYF) and 93–161 (PRRP…SVYR).

It belongs to the HMGB family.

Its subcellular location is the nucleus. The protein resides in the chromosome. This is High mobility group protein B4 (HMGB4) from Bos taurus (Bovine).